We begin with the raw amino-acid sequence, 153 residues long: Protein-export protein SecB (153 aa).

This sequence belongs to the SecB family. In terms of assembly, homotetramer, a dimer of dimers. One homotetramer interacts with 1 SecA dimer.

The protein localises to the cytoplasm. One of the proteins required for the normal export of preproteins out of the cell cytoplasm. It is a molecular chaperone that binds to a subset of precursor proteins, maintaining them in a translocation-competent state. It also specifically binds to its receptor SecA. The chain is Protein-export protein SecB from Erwinia tasmaniensis (strain DSM 17950 / CFBP 7177 / CIP 109463 / NCPPB 4357 / Et1/99).